We begin with the raw amino-acid sequence, 163 residues long: Protein GOLVEN 3 (163 aa).

The first 20 residues, Met-1–Glu-20, serve as a signal peptide directing secretion. The propeptide occupies Glu-21 to Asp-141. Residue Tyr-143 is modified to Sulfotyrosine. Positions Pro-144–Phe-163 are disordered. Pro-154 is modified (hydroxyproline). Residues Arg-158–Phe-163 constitute a propeptide that is removed on maturation.

This sequence belongs to the RGF family. In terms of assembly, binds to LRR receptor-like serine/threonine-protein kinases RGI1, RGI2 and RGI3 to trigger their dimerization with SERK proteins and subsequent signaling. Expressed in roots, specifically in the root apical meristem (RAM).

The protein localises to the secreted. Signaling peptide (root growth factor) required during root gravitropism in a PIN2-traffic dependent manner, thus influencing the formation of auxin gradients. Maintains the postembryonic root stem cell niche. This chain is Protein GOLVEN 3, found in Arabidopsis thaliana (Mouse-ear cress).